We begin with the raw amino-acid sequence, 340 residues long: Glyceraldehyde-3-phosphate dehydrogenase (340 aa).

NAD(+)-binding positions include T13–I14 and G112. S141–N143 is a D-glyceraldehyde 3-phosphate binding site. The active-site Nucleophile is the C142. R170 contacts NAD(+). H196 to G197 is a binding site for D-glyceraldehyde 3-phosphate. Residue Q302 participates in NAD(+) binding.

The protein belongs to the glyceraldehyde-3-phosphate dehydrogenase family. As to quaternary structure, homotetramer.

The protein localises to the cytoplasm. It catalyses the reaction D-glyceraldehyde 3-phosphate + phosphate + NADP(+) = (2R)-3-phospho-glyceroyl phosphate + NADPH + H(+). It carries out the reaction D-glyceraldehyde 3-phosphate + phosphate + NAD(+) = (2R)-3-phospho-glyceroyl phosphate + NADH + H(+). It functions in the pathway carbohydrate degradation; glycolysis; pyruvate from D-glyceraldehyde 3-phosphate: step 1/5. The chain is Glyceraldehyde-3-phosphate dehydrogenase (gap) from Archaeoglobus fulgidus (strain ATCC 49558 / DSM 4304 / JCM 9628 / NBRC 100126 / VC-16).